Here is a 113-residue protein sequence, read N- to C-terminus: U11-theraphotoxin-Hhn1a (113 aa).

An N-terminal signal peptide occupies residues 1-21; sequence MNTVRVTFLLVFVLAVSLGQA. A propeptide spanning residues 22-74 is cleaved from the precursor; the sequence is DKDENRMEMQEKTEQGKSYLDFAENLLLQKLEELVAKLLEEDSEESRNSRQKR. 3 disulfide bridges follow: cysteine 75-cysteine 90, cysteine 82-cysteine 95, and cysteine 89-cysteine 110.

The protein belongs to the neurotoxin 14 (magi-1) family. 01 (HNTX-16) subfamily. As to expression, expressed by the venom gland.

It is found in the secreted. Probable ion channel inhibitor. The polypeptide is U11-theraphotoxin-Hhn1a (Cyriopagopus hainanus (Chinese bird spider)).